The following is a 402-amino-acid chain: Nodulation protein E (402 aa).

Positions 2 to 401 constitute a Ketosynthase family 3 (KS3) domain; it reads DRRVVITGIG…GMNAVLAFRQ (400 aa). Catalysis depends on for beta-ketoacyl synthase activity residues cysteine 162, histidine 294, and histidine 331. The helical transmembrane segment at 329 to 348 threads the bilayer; it reads HAHCLGAASALEMIACVMAI.

This sequence belongs to the thiolase-like superfamily. Beta-ketoacyl-ACP synthases family.

It localises to the cell inner membrane. Functionally, proposed to synthesize NOD factor fatty acyl chain. Involved in the synthesis of a highly unsaturated fatty acid moiety, which forms part of a lipo-oligosaccharide that is responsible for host specificity. This chain is Nodulation protein E (nodE), found in Rhizobium sp. (strain N33).